The chain runs to 374 residues: Queuine tRNA-ribosyltransferase (374 aa).

Aspartate 90 serves as the catalytic Proton acceptor. Substrate contacts are provided by residues 90–94 (DSGGF), aspartate 144, glutamine 193, and glycine 220. Residues 251 to 257 (GVGTPED) are RNA binding. Aspartate 270 acts as the Nucleophile in catalysis. The interval 275-279 (TRNAR) is RNA binding; important for wobble base 34 recognition. Residues cysteine 308, cysteine 310, cysteine 313, and histidine 339 each contribute to the Zn(2+) site.

Belongs to the queuine tRNA-ribosyltransferase family. As to quaternary structure, homodimer. Within each dimer, one monomer is responsible for RNA recognition and catalysis, while the other monomer binds to the replacement base PreQ1. The cofactor is Zn(2+).

It carries out the reaction 7-aminomethyl-7-carbaguanine + guanosine(34) in tRNA = 7-aminomethyl-7-carbaguanosine(34) in tRNA + guanine. It participates in tRNA modification; tRNA-queuosine biosynthesis. In terms of biological role, catalyzes the base-exchange of a guanine (G) residue with the queuine precursor 7-aminomethyl-7-deazaguanine (PreQ1) at position 34 (anticodon wobble position) in tRNAs with GU(N) anticodons (tRNA-Asp, -Asn, -His and -Tyr). Catalysis occurs through a double-displacement mechanism. The nucleophile active site attacks the C1' of nucleotide 34 to detach the guanine base from the RNA, forming a covalent enzyme-RNA intermediate. The proton acceptor active site deprotonates the incoming PreQ1, allowing a nucleophilic attack on the C1' of the ribose to form the product. After dissociation, two additional enzymatic reactions on the tRNA convert PreQ1 to queuine (Q), resulting in the hypermodified nucleoside queuosine (7-(((4,5-cis-dihydroxy-2-cyclopenten-1-yl)amino)methyl)-7-deazaguanosine). The chain is Queuine tRNA-ribosyltransferase from Campylobacter fetus subsp. fetus (strain 82-40).